Here is a 279-residue protein sequence, read N- to C-terminus: Energy-coupling factor transporter ATP-binding protein EcfA2 (279 aa).

The ABC transporter domain occupies 3 to 245 (ITLKNVSYTY…LDFMESIQLG (243 aa)). Residue 40 to 47 (GHTGSGKS) participates in ATP binding.

The protein belongs to the ABC transporter superfamily. Energy-coupling factor EcfA family. As to quaternary structure, forms a stable energy-coupling factor (ECF) transporter complex composed of 2 membrane-embedded substrate-binding proteins (S component), 2 ATP-binding proteins (A component) and 2 transmembrane proteins (T component).

The protein resides in the cell membrane. ATP-binding (A) component of a common energy-coupling factor (ECF) ABC-transporter complex. Unlike classic ABC transporters this ECF transporter provides the energy necessary to transport a number of different substrates. The protein is Energy-coupling factor transporter ATP-binding protein EcfA2 of Streptococcus sanguinis (strain SK36).